The primary structure comprises 356 residues: Branched-chain-amino-acid transaminase 1 (356 aa).

Lys197 is subject to N6-(pyridoxal phosphate)lysine.

It belongs to the class-IV pyridoxal-phosphate-dependent aminotransferase family. The cofactor is pyridoxal 5'-phosphate.

The catalysed reaction is L-leucine + 2-oxoglutarate = 4-methyl-2-oxopentanoate + L-glutamate. It carries out the reaction L-isoleucine + 2-oxoglutarate = (S)-3-methyl-2-oxopentanoate + L-glutamate. It catalyses the reaction L-valine + 2-oxoglutarate = 3-methyl-2-oxobutanoate + L-glutamate. The protein operates within amino-acid biosynthesis; L-isoleucine biosynthesis; L-isoleucine from 2-oxobutanoate: step 4/4. It participates in amino-acid biosynthesis; L-leucine biosynthesis; L-leucine from 3-methyl-2-oxobutanoate: step 4/4. It functions in the pathway amino-acid biosynthesis; L-valine biosynthesis; L-valine from pyruvate: step 4/4. Inhibited by canaline. Its function is as follows. Transaminates branched-chain amino acids and ketoglutarate. Involved in the final step of the methionine regeneration pathway, where ketomethiobutyrate (KMTB) is converted to methionine via a transamination. The amino donor preference is isoleucine, leucine, valine, phenylalanine, and tyrosine. This Bacillus subtilis (strain 168) protein is Branched-chain-amino-acid transaminase 1 (ilvE).